Here is a 557-residue protein sequence, read N- to C-terminus: Formate--tetrahydrofolate ligase (557 aa).

Residue 67–74 (TPAGEGKT) participates in ATP binding.

Belongs to the formate--tetrahydrofolate ligase family.

The enzyme catalyses (6S)-5,6,7,8-tetrahydrofolate + formate + ATP = (6R)-10-formyltetrahydrofolate + ADP + phosphate. It participates in one-carbon metabolism; tetrahydrofolate interconversion. The sequence is that of Formate--tetrahydrofolate ligase from Cereibacter sphaeroides (strain KD131 / KCTC 12085) (Rhodobacter sphaeroides).